The sequence spans 275 residues: Hydroxyethylthiazole kinase (275 aa).

Methionine 53 provides a ligand contact to substrate. ATP is bound by residues arginine 128 and serine 174. Residue glycine 201 participates in substrate binding.

It belongs to the Thz kinase family. It depends on Mg(2+) as a cofactor.

It carries out the reaction 5-(2-hydroxyethyl)-4-methylthiazole + ATP = 4-methyl-5-(2-phosphooxyethyl)-thiazole + ADP + H(+). Its pathway is cofactor biosynthesis; thiamine diphosphate biosynthesis; 4-methyl-5-(2-phosphoethyl)-thiazole from 5-(2-hydroxyethyl)-4-methylthiazole: step 1/1. Functionally, catalyzes the phosphorylation of the hydroxyl group of 4-methyl-5-beta-hydroxyethylthiazole (THZ). This is Hydroxyethylthiazole kinase from Kineococcus radiotolerans (strain ATCC BAA-149 / DSM 14245 / SRS30216).